Consider the following 342-residue polypeptide: MTNILSPEKSENDQELPIRPSYLQEFVGQQQIKENLSVFIKAAKSRNEHLDHTLFYGPPGLGKTTLAKIISNEIGGNFKSTSGPAILKVADLAAILTNLEKNDVLFIDEIHRLNTAVEEVLYPAMEDFELDIIIGEGSAARSVKITLPKFTLIGATTRLGLLSNPLRDRFGIPMRLNFYNTGELKKVLNRASKLLDIDLTDSGSEEIAKRSRGTPRIALRLLRRIRDFAAVDGKSRVDKEISDFGLNRLEVDRIGLDSNDYRYLKFIADNYNGGPVGIETIAAALSEQRDALEETIEPYLIQIGLLQRTPRGRVITIAAFEHLKMPVPNQSHHQFNIFNENE.

The interval 1-179 (MTNILSPEKS…FGIPMRLNFY (179 aa)) is large ATPase domain (RuvB-L). ATP is bound by residues Ile-18, Arg-19, Gly-60, Lys-63, Thr-64, Thr-65, 126–128 (EDF), Arg-169, Tyr-179, and Arg-216. Thr-64 is a binding site for Mg(2+). A small ATPAse domain (RuvB-S) region spans residues 180–250 (NTGELKKVLN…ISDFGLNRLE (71 aa)). The head domain (RuvB-H) stretch occupies residues 253–342 (RIGLDSNDYR…HQFNIFNENE (90 aa)). The DNA site is built by Arg-289, Arg-308, and Arg-313.

The protein belongs to the RuvB family. In terms of assembly, homohexamer. Forms an RuvA(8)-RuvB(12)-Holliday junction (HJ) complex. HJ DNA is sandwiched between 2 RuvA tetramers; dsDNA enters through RuvA and exits via RuvB. An RuvB hexamer assembles on each DNA strand where it exits the tetramer. Each RuvB hexamer is contacted by two RuvA subunits (via domain III) on 2 adjacent RuvB subunits; this complex drives branch migration. In the full resolvosome a probable DNA-RuvA(4)-RuvB(12)-RuvC(2) complex forms which resolves the HJ.

It localises to the cytoplasm. The catalysed reaction is ATP + H2O = ADP + phosphate + H(+). Functionally, the RuvA-RuvB-RuvC complex processes Holliday junction (HJ) DNA during genetic recombination and DNA repair, while the RuvA-RuvB complex plays an important role in the rescue of blocked DNA replication forks via replication fork reversal (RFR). RuvA specifically binds to HJ cruciform DNA, conferring on it an open structure. The RuvB hexamer acts as an ATP-dependent pump, pulling dsDNA into and through the RuvAB complex. RuvB forms 2 homohexamers on either side of HJ DNA bound by 1 or 2 RuvA tetramers; 4 subunits per hexamer contact DNA at a time. Coordinated motions by a converter formed by DNA-disengaged RuvB subunits stimulates ATP hydrolysis and nucleotide exchange. Immobilization of the converter enables RuvB to convert the ATP-contained energy into a lever motion, pulling 2 nucleotides of DNA out of the RuvA tetramer per ATP hydrolyzed, thus driving DNA branch migration. The RuvB motors rotate together with the DNA substrate, which together with the progressing nucleotide cycle form the mechanistic basis for DNA recombination by continuous HJ branch migration. Branch migration allows RuvC to scan DNA until it finds its consensus sequence, where it cleaves and resolves cruciform DNA. This is Holliday junction branch migration complex subunit RuvB from Rickettsia conorii (strain ATCC VR-613 / Malish 7).